We begin with the raw amino-acid sequence, 348 residues long: Protein RecA (348 aa).

65-72 (GPESSGKT) is a binding site for ATP. Positions 328-348 (SKPQAETSARLATQEELADDY) are disordered.

Belongs to the RecA family.

It is found in the cytoplasm. Can catalyze the hydrolysis of ATP in the presence of single-stranded DNA, the ATP-dependent uptake of single-stranded DNA by duplex DNA, and the ATP-dependent hybridization of homologous single-stranded DNAs. It interacts with LexA causing its activation and leading to its autocatalytic cleavage. The sequence is that of Protein RecA from Ectopseudomonas oleovorans (Pseudomonas oleovorans).